Here is a 154-residue protein sequence, read N- to C-terminus: 6,7-dimethyl-8-ribityllumazine synthase (154 aa).

Residues phenylalanine 15, 47–49 (TFD), and 71–73 (AVI) contribute to the 5-amino-6-(D-ribitylamino)uracil site. A (2S)-2-hydroxy-3-oxobutyl phosphate-binding site is contributed by 76 to 77 (ET). Histidine 79 (proton donor) is an active-site residue. Leucine 104 is a binding site for 5-amino-6-(D-ribitylamino)uracil. Position 119 (arginine 119) interacts with (2S)-2-hydroxy-3-oxobutyl phosphate.

It belongs to the DMRL synthase family.

It carries out the reaction (2S)-2-hydroxy-3-oxobutyl phosphate + 5-amino-6-(D-ribitylamino)uracil = 6,7-dimethyl-8-(1-D-ribityl)lumazine + phosphate + 2 H2O + H(+). It participates in cofactor biosynthesis; riboflavin biosynthesis; riboflavin from 2-hydroxy-3-oxobutyl phosphate and 5-amino-6-(D-ribitylamino)uracil: step 1/2. Functionally, catalyzes the formation of 6,7-dimethyl-8-ribityllumazine by condensation of 5-amino-6-(D-ribitylamino)uracil with 3,4-dihydroxy-2-butanone 4-phosphate. This is the penultimate step in the biosynthesis of riboflavin. This chain is 6,7-dimethyl-8-ribityllumazine synthase, found in Saccharolobus islandicus (strain M.16.27) (Sulfolobus islandicus).